A 430-amino-acid polypeptide reads, in one-letter code: MSSVVVVGTQWGDEGKGKITDFLSENAEAIARYQGGNNAGHTIKFDGVTYKLHLIPSGIFYKEKISVIGNGMVVDPKALVEELKYLHDKGVDTSNLRISNRAHIILPYHIRIDEADEERKGANKIGTTKKGIGPAYMDKAARVGIRIIDLLDKETFKEKLEHNLGEKNRLLERFYELEGFKLEDILEEYYDYGQQFKEYVCDTSVVLNDALDDGKRVLFEGAQGVMLDIDQGTYPFVTSSNPIAGGVTIGSGVGPSKINHVVGVAKAYTTRVGDGPFPTELFDSIGDTIREVGHEYGTTTGRPRRVGWFDSVVVRHARRVSGLTDLSLTLLDVLTGIETLKICVAYKLDGKTITEFPASLKDLARCEPVYEELPGWTEDITGVTSLDDLPVNCRHYMERIAQLTGVQVSMFSVGPDRAQTHVIKSVWRLA.

GTP contacts are provided by residues 12 to 18 (GDEGKGK) and 40 to 42 (GHT). Asp-13 functions as the Proton acceptor in the catalytic mechanism. Residues Asp-13 and Gly-40 each coordinate Mg(2+). IMP-binding positions include 13–16 (DEGK), 38–41 (NAGH), Thr-128, Arg-142, Gln-223, Thr-238, and Arg-302. The active-site Proton donor is His-41. 298 to 304 (TTTGRPR) contributes to the substrate binding site. Residues Arg-304, 330–332 (LLD), and 412–414 (SVG) contribute to the GTP site.

It belongs to the adenylosuccinate synthetase family. As to quaternary structure, homodimer. Mg(2+) serves as cofactor.

The protein localises to the cytoplasm. The catalysed reaction is IMP + L-aspartate + GTP = N(6)-(1,2-dicarboxyethyl)-AMP + GDP + phosphate + 2 H(+). It functions in the pathway purine metabolism; AMP biosynthesis via de novo pathway; AMP from IMP: step 1/2. Plays an important role in the de novo pathway of purine nucleotide biosynthesis. Catalyzes the first committed step in the biosynthesis of AMP from IMP. The polypeptide is Adenylosuccinate synthetase (Listeria monocytogenes serotype 4a (strain HCC23)).